The chain runs to 300 residues: Acetylglutamate kinase (300 aa).

Substrate contacts are provided by residues 69 to 70, arginine 91, and asparagine 197; that span reads GG.

Belongs to the acetylglutamate kinase family. ArgB subfamily.

Its subcellular location is the cytoplasm. It catalyses the reaction N-acetyl-L-glutamate + ATP = N-acetyl-L-glutamyl 5-phosphate + ADP. Its pathway is amino-acid biosynthesis; L-arginine biosynthesis; N(2)-acetyl-L-ornithine from L-glutamate: step 2/4. In terms of biological role, catalyzes the ATP-dependent phosphorylation of N-acetyl-L-glutamate. The polypeptide is Acetylglutamate kinase (Kineococcus radiotolerans (strain ATCC BAA-149 / DSM 14245 / SRS30216)).